The following is a 230-amino-acid chain: Transcriptional regulatory protein CitT (230 aa).

Residues 6 to 124 (KVLIIEDDFR…VLHQRLDAYV (119 aa)) enclose the Response regulatory domain. Position 59 is a 4-aspartylphosphate (D59). The H-T-H motif DNA-binding region spans 184–203 (AMEGARLIGASRSTVRRYFE).

In terms of processing, phosphorylated by CitS.

The protein localises to the cytoplasm. In terms of biological role, member of the two-component regulatory system CitT/CitS. This Halalkalibacterium halodurans (strain ATCC BAA-125 / DSM 18197 / FERM 7344 / JCM 9153 / C-125) (Bacillus halodurans) protein is Transcriptional regulatory protein CitT (citT).